Here is a 545-residue protein sequence, read N- to C-terminus: Putative serine/threonine-protein kinase L673 (545 aa).

In terms of domain architecture, Cyclin N-terminal spans 13-125 (RLGLVNWMLN…YKVYYLTIWK (113 aa)). The Protein kinase domain maps to 264–543 (IDFQNKLGSG…NCLKKIKESF (280 aa)). Residues 270 to 278 (LGSGTYGSV) and Lys291 contribute to the ATP site. Asp384 serves as the catalytic Proton acceptor.

Belongs to the protein kinase superfamily. Ser/Thr protein kinase family.

The enzyme catalyses L-seryl-[protein] + ATP = O-phospho-L-seryl-[protein] + ADP + H(+). The catalysed reaction is L-threonyl-[protein] + ATP = O-phospho-L-threonyl-[protein] + ADP + H(+). This is Putative serine/threonine-protein kinase L673 from Acanthamoeba polyphaga (Amoeba).